Reading from the N-terminus, the 330-residue chain is RNA polymerase sigma factor RpoS (330 aa).

A sigma-70 factor domain-1 region spans residues 56–89 (DATQLYLGEIGYSPLLTAEEEVYFARRALRGDVA). Positions 94–164 (MIESNLRLVV…ERAIMNQTRT (71 aa)) are sigma-70 factor domain-2. An Interaction with polymerase core subunit RpoC motif is present at residues 118–121 (DLIE). Positions 174–249 (ELNVYLRTAR…DEKENGPEDT (76 aa)) are sigma-70 factor domain-3. The tract at residues 262–315 (WLFELNAKQREVLARRFGLLGYEAATLEDVGREIGLTRERVRQIQVEGLRRLRE) is sigma-70 factor domain-4. The H-T-H motif DNA-binding region spans 288 to 307 (LEDVGREIGLTRERVRQIQV).

Belongs to the sigma-70 factor family. RpoS subfamily. Interacts with the RNA polymerase core enzyme.

Its subcellular location is the cytoplasm. Its function is as follows. Sigma factors are initiation factors that promote the attachment of RNA polymerase to specific initiation sites and are then released. This sigma factor is the master transcriptional regulator of the stationary phase and the general stress response. The chain is RNA polymerase sigma factor RpoS from Shigella flexneri.